Reading from the N-terminus, the 288-residue chain is Damage-control phosphatase AF_1104 (288 aa).

The short motif at Cys7–Cys10 is the Subfamily I CxxC motif element. Asp160, Asn161, and Asp194 together coordinate Mn(2+). The short motif at Ala247 to Glu250 is the Subfamily I GNFE-like motif element. The Subfamily I KC motif motif lies at Lys267–Cys268.

This sequence belongs to the damage-control phosphatase family. Nucleotides phosphatase I subfamily. Requires [2Fe-2S] cluster as cofactor. Mn(2+) serves as cofactor. Ni(2+) is required as a cofactor.

Metal-dependent phosphatase with probable damage-control functions. Could hydrolyze oxidatively damaged purine nucleotides or their biosynthetic intermediates. In Archaeoglobus fulgidus (strain ATCC 49558 / DSM 4304 / JCM 9628 / NBRC 100126 / VC-16), this protein is Damage-control phosphatase AF_1104.